The sequence spans 353 residues: Trans-enoyl reductase eqxC (353 aa).

An NADP(+)-binding site is contributed by valine 45–lysine 48. Isoleucine 131 to leucine 138 is a binding site for substrate. NADP(+)-binding positions include serine 166–threonine 169, serine 189–asparagine 192, tyrosine 207, and leucine 254–glutamate 255. Residue glycine 275 to leucine 279 coordinates substrate. Residue isoleucine 344–serine 345 coordinates NADP(+).

This sequence belongs to the zinc-containing alcohol dehydrogenase family. As to quaternary structure, monomer.

It carries out the reaction L-serine + 7 malonyl-CoA + acetyl-CoA + 2 S-adenosyl-L-methionine + ATP + 8 NADPH + 11 H(+) = (5S)-3-[(2E,6R,8E,10E,12E)-2,6-dimethyltetradeca-2,8,10,12-tetraenoyl]-5-(hydroxymethyl)pyrrolidine-2,4-dione + AMP + 2 S-adenosyl-L-homocysteine + 7 CO2 + diphosphate + 8 NADP(+) + 8 CoA + 6 H2O. It functions in the pathway mycotoxin biosynthesis. Its function is as follows. Trans-enoyl reductase; part of the gene cluster that mediates the biosynthesis of equisetin, a trans-fused decalin-containing tetramic acid with antimicrobial activity. The PKS module of eqxS together with the enoylreductase eqxC catalyze the formation of the polyketide unit which is then conjugated to L-serine by the condensation domain of the eqxS NRPS module. Activity of the Dieckmann cyclase domain (RED) results in release of the Dieckmann product intermediate. Diels-Alderase eqx3 is involved in endo-selective Diels-Alder cycloaddition to form the decalin ring, leading to the production of N-desmethylequisetin also called trichosetin. Subsequent N-methylation is carried out by eqxD to give equisetin. The protein is Trans-enoyl reductase eqxC of Fusarium heterosporum.